A 547-amino-acid polypeptide reads, in one-letter code: Putative laccase-5 (547 aa).

Positions 1-35 (MGTPRGLRNAGSSSSACRFLAAFAVLLALPTLTAG) are cleaved as a signal peptide. 2 Plastocyanin-like domains span residues 43–159 (NVQM…PKRG) and 170–323 (ELPP…YAPT). Asn-48 and Asn-89 each carry an N-linked (GlcNAc...) asparagine glycan. Cu cation contacts are provided by His-93, His-95, His-138, and His-140. N-linked (GlcNAc...) asparagine glycans are attached at residues Asn-199, Asn-215, Asn-251, Asn-311, Asn-342, Asn-349, Asn-388, Asn-395, Asn-405, and Asn-430. The Plastocyanin-like 3 domain maps to 408–531 (FVRPRVALLE…SMAWLVNDGP (124 aa)). Residues His-448, His-451, His-453, His-510, Cys-511, His-512, and His-516 each coordinate Cu cation.

Belongs to the multicopper oxidase family. It depends on Cu cation as a cofactor.

It is found in the secreted. The protein resides in the extracellular space. The protein localises to the apoplast. The enzyme catalyses 4 hydroquinone + O2 = 4 benzosemiquinone + 2 H2O. Functionally, lignin degradation and detoxification of lignin-derived products. The chain is Putative laccase-5 (LAC5) from Oryza sativa subsp. japonica (Rice).